The following is a 46-amino-acid chain: Protein krueppel (46 aa).

C2H2-type zinc fingers lie at residues 1 to 4, 10 to 32, and 38 to 46; these read MRLH, YHCTHCERQFVQVANLRRHLRVH, and YACELCTSK.

The protein belongs to the krueppel C2H2-type zinc-finger protein family.

It localises to the nucleus. Functionally, krueppel is a gap class segmentation protein. This is Protein krueppel (Kr) from Lithobius forficatus (Centipede).